A 331-amino-acid chain; its full sequence is Outer membrane lipoprotein PM1514 (331 aa).

Residues 1–20 form the signal peptide; that stretch reads MQYFDIKKSLPVFCSLLITA. Residue Cys-21 is the site of N-palmitoyl cysteine attachment. The S-diacylglycerol cysteine moiety is linked to residue Cys-21.

The protein localises to the cell outer membrane. The protein resides in the cell surface. This chain is Outer membrane lipoprotein PM1514, found in Pasteurella multocida (strain Pm70).